A 198-amino-acid polypeptide reads, in one-letter code: MARCKS-related protein (198 aa).

The disordered stretch occupies residues 1-198 (MGSQSSKAPR…DPAPASEQNE (198 aa)). Gly-2 carries the N-myristoyl glycine lipid modification. Thr-14 is subject to Phosphothreonine. A phosphoserine mark is found at Ser-22, Ser-36, Ser-41, and Ser-48. The segment covering 53–62 (GTEEAAGATG) has biased composition (low complexity). Position 71 is a phosphoserine (Ser-71). Over residues 76–85 (AKGEVPPKET) the composition is skewed to basic and acidic residues. Position 85 is a phosphothreonine (Thr-85). The segment covering 86-98 (PKKKKKFSFKKPF) has biased composition (basic residues). Residues 87–110 (KKKKKFSFKKPFKLSGLSFKRNRK) form an effector domain involved in lipid-binding and calmodulin-binding region. Phosphoserine; by PKC is present on residues Ser-93, Ser-101, and Ser-104. Ser-119 carries the phosphoserine modification. Ser-120 carries the phosphoserine; by MAPK8 modification. A Phosphoserine modification is found at Ser-132. Thr-148 is modified (phosphothreonine; by MAPK8). A phosphoserine mark is found at Ser-151 and Ser-162. A compositionally biased stretch (low complexity) spans 156-167 (AKGAEASAAAKG). Position 170 is a phosphothreonine (Thr-170). Thr-182 carries the post-translational modification Phosphothreonine; by MAPK8.

The protein belongs to the MARCKS family. In terms of assembly, binds to filamentous actin (F-actin), but not to monomeric G-actin, independently of its phosphorylation status. Interacts with calmodulin. Phosphorylated. Phosphorylation at Ser-120 and Thr-182 is non-redundantly catalyzed by MAPK8 in vivo. Phosphorylation at Thr-148 is preferentially catalyzed by MAPK8 in vivo, but this modification can also be catalyzed by other kinases in the absence of MAPK8. May be phosphorylated by protein kinase C, which disrupts the interaction with calmodulin.

It localises to the cytoplasm. The protein resides in the cytoskeleton. The protein localises to the cell membrane. Its function is as follows. Controls cell movement by regulating actin cytoskeleton homeostasis and filopodium and lamellipodium formation. When unphosphorylated, induces cell migration. When phosphorylated by MAPK8, induces actin bundles formation and stabilization, thereby reducing actin plasticity, hence restricting cell movement, including neuronal migration. May be involved in coupling the protein kinase C and calmodulin signal transduction systems. The sequence is that of MARCKS-related protein (MARCKSL1) from Bos taurus (Bovine).